Reading from the N-terminus, the 109-residue chain is Movement protein (109 aa).

Positions 1–28 (MDSFGRAPPLWPQSALPRVPGAAPSSSG) are disordered. The helical transmembrane segment at 34 to 54 (VGEIAIFTFVAVLALYLLWSW) threads the bilayer.

Belongs to the mastrevirus movement protein family. As to quaternary structure, interacts with the capsid protein (CP). Part of a MP-CP-viral DNA complex.

It is found in the host membrane. In terms of biological role, involved in the viral transport within, and between cells. This Sugarcane streak virus (isolate South Africa) (SSV) protein is Movement protein.